The following is a 315-amino-acid chain: Iron(3+)-hydroxamate-binding protein FhuD (315 aa).

Positions 1-23 (MTHIYKKLGAAFFALLLIAALAA) are cleaved as a signal peptide. The N-palmitoyl cysteine moiety is linked to residue Cys-24. A lipid anchor (S-diacylglycerol cysteine) is attached at Cys-24. The Fe/B12 periplasmic-binding domain maps to 60-315 (RVVVMADGYY…LEFITESLTK (256 aa)).

It belongs to the bacterial solute-binding protein 8 family. As to quaternary structure, the complex is composed of an ATP-binding protein (FhuC), two transmembrane proteins (FhuB and FhuG) and a solute-binding protein (FhuD or YxeB).

The protein resides in the cell membrane. It is found in the membrane raft. Functionally, part of the ABC transporter complex FhuCBGD involved in iron(3+)-hydroxamate import. Binds the iron(3+)-hydroxamate complex and transfers it to the membrane-bound permease. Required for the transport of ferrichrome and coprogen. The protein is Iron(3+)-hydroxamate-binding protein FhuD (fhuD) of Bacillus subtilis (strain 168).